A 203-amino-acid chain; its full sequence is Anti-sigma-W factor RsiW (203 aa).

Residues 1 to 86 (MECPKEIVLL…TARLRRFLHR (86 aa)) lie on the Cytoplasmic side of the membrane. The Zn(2+) site is built by His30, Cys34, and Cys37. The helical transmembrane segment at 87–103 (HPLLTAASLFLALTLGS) threads the bilayer. The Extracellular portion of the chain corresponds to 104–203 (LASSWGERGA…RFNRALQSIE (100 aa)).

Belongs to the zinc-associated anti-sigma factor (ZAS) superfamily. Anti-sigma-W factor family. It depends on Zn(2+) as a cofactor. Post-translationally, is processed by three successive proteolytic events. First, the extracellular region of RsiW is cleaved by PrsW (Site-1 cleavage) in response to cell envelope stresses. Next, it undergoes cleavage at an intramembrane site (Site-2 cleavage) mediated by RasP. This cleavage uncovers a cryptic proteolytic tag with conserved alanine residues in the transmembrane segment, that is recognized mainly by the ClpXP protease, which completely degrades the protein in the cytoplasm and leads to the induction of the sigma-W-controlled genes.

It localises to the membrane. Its function is as follows. Is the anti-sigma factor for SigW. The presence of RsiW leads to the inactivation of SigW, and its proteolytic destruction to sigma-W activation. The sequence is that of Anti-sigma-W factor RsiW (rsiW) from Geobacillus kaustophilus (strain HTA426).